We begin with the raw amino-acid sequence, 619 residues long: Adagio protein 3 (619 aa).

The 80-residue stretch at 44–123 folds into the PAS domain; it reads VGMFYYPMTP…SEIRRCLEEG (80 aa). Cysteine 91 bears the S-4a-FMN cysteine mark. Residues 127–168 form the PAC domain; the sequence is QGELLNFRKDGTPLVNRLRLAPIRDDDGTITHVIGIQVFSET. Residues 211–257 form the F-box domain; that stretch reads ILQLSDEVLAHNILSRLTPRDVASIGSACRRLRQLTKNESVRKMVCQ. Kelch repeat units follow at residues 304-354, 357-404, 409-457, 462-513, and 523-571; these read SRCN…TSSP, RWGH…AGGT, RSWH…PTSW, RLGH…ECSA, and RLDH…NVPG.

This sequence belongs to the ADAGIO family. Interacts with ADO1 (via Kelch repeats), ADO2 (via Kelch repeats), SKP1A/ASK1, SKP1B/ASK2, ASK3, SKP1K/ASK11, ASK12, ASK13 and SKP1N/ASK14. Interacts (via Kelch repeats) with CDF1, CDF2 and CDF3. Interacts (via N-terminus) with CO and GI (via N-terminus) in a blue-light-dependent manner. Post-translationally, FMN binds covalently to cysteine after exposure to blue light and is reversed in the dark. In terms of tissue distribution, highly expressed in stomata and leaves and to a lower extent in seeds, roots, rosettes, stems and siliques. Also present in sepals and anther filaments.

It is found in the nucleus. The protein localises to the cytoplasm. It functions in the pathway protein modification; protein ubiquitination. Functionally, component of an E3 ubiquitin ligase complex that plays a central role in blue light-dependent circadian cycles. Acts as a blue light photoreceptor, due to the presence of FMN, that mediates light-regulated protein degradation of critical clock components by targeting them to the proteasome complex. The SCF(ADO3) E3 ubiquitin ligase complex is involved in the regulation of circadian clock-dependent processes including transition to flowering time, hypocotyl elongation, cotyledons and leaf movement rhythms. Forms a complex with 'GIGANTEA' (GI) to regulate 'CONSTANS' (CO) expression. Promotes CO expression during the light period of long days by decreasing the stability of CDF1 and CDF2 and by interacting directly with the CO protein and stabilizing it. ADO3 function is mainly GI dependent. Does not act as a regulator of CDF1 transcription. The interactions of ADO1/ZTL and ADO2 with ADO3 prevent its interaction with CDF1. The sequence is that of Adagio protein 3 (ADO3) from Arabidopsis thaliana (Mouse-ear cress).